The following is a 227-amino-acid chain: ATP-dependent dethiobiotin synthetase BioD (227 aa).

13–18 (NIGKTV) contributes to the ATP binding site. Thr17 provides a ligand contact to Mg(2+). Lys38 is a catalytic residue. Residues Asp55 and 116 to 119 (EGIG) each bind ATP. 2 residues coordinate Mg(2+): Asp55 and Glu116.

The protein belongs to the dethiobiotin synthetase family. Homodimer. It depends on Mg(2+) as a cofactor.

It localises to the cytoplasm. The catalysed reaction is (7R,8S)-7,8-diammoniononanoate + CO2 + ATP = (4R,5S)-dethiobiotin + ADP + phosphate + 3 H(+). Its pathway is cofactor biosynthesis; biotin biosynthesis; biotin from 7,8-diaminononanoate: step 1/2. Functionally, catalyzes a mechanistically unusual reaction, the ATP-dependent insertion of CO2 between the N7 and N8 nitrogen atoms of 7,8-diaminopelargonic acid (DAPA, also called 7,8-diammoniononanoate) to form a ureido ring. The protein is ATP-dependent dethiobiotin synthetase BioD of Buchnera aphidicola subsp. Baizongia pistaciae (strain Bp).